The primary structure comprises 118 residues: Small ribosomal subunit protein uS13 (118 aa).

The disordered stretch occupies residues 94–118; it reads SLPLRGQRTKTNARTRKGPRKPIKR.

The protein belongs to the universal ribosomal protein uS13 family. As to quaternary structure, part of the 30S ribosomal subunit. Forms a loose heterodimer with protein S19. Forms two bridges to the 50S subunit in the 70S ribosome.

Functionally, located at the top of the head of the 30S subunit, it contacts several helices of the 16S rRNA. In the 70S ribosome it contacts the 23S rRNA (bridge B1a) and protein L5 of the 50S subunit (bridge B1b), connecting the 2 subunits; these bridges are implicated in subunit movement. Contacts the tRNAs in the A and P-sites. This chain is Small ribosomal subunit protein uS13, found in Pseudoalteromonas translucida (strain TAC 125).